Consider the following 358-residue polypeptide: NADH-quinone oxidoreductase subunit H (358 aa).

8 helical membrane-spanning segments follow: residues 20–40 (ITVG…IPLI), 95–115 (ALFY…WAVI), 128–148 (IGLL…IIAG), 168–188 (ISYE…SGSM), 206–226 (VFSW…ISAV), 253–273 (GFAF…IAAL), 295–315 (TPSA…YLWI), and 334–354 (VLIP…ISPL).

It belongs to the complex I subunit 1 family. As to quaternary structure, NDH-1 is composed of 14 different subunits. Subunits NuoA, H, J, K, L, M, N constitute the membrane sector of the complex.

Its subcellular location is the cell inner membrane. It catalyses the reaction a quinone + NADH + 5 H(+)(in) = a quinol + NAD(+) + 4 H(+)(out). In terms of biological role, NDH-1 shuttles electrons from NADH, via FMN and iron-sulfur (Fe-S) centers, to quinones in the respiratory chain. The immediate electron acceptor for the enzyme in this species is believed to be ubiquinone. Couples the redox reaction to proton translocation (for every two electrons transferred, four hydrogen ions are translocated across the cytoplasmic membrane), and thus conserves the redox energy in a proton gradient. This subunit may bind ubiquinone. The sequence is that of NADH-quinone oxidoreductase subunit H from Neisseria meningitidis serogroup B (strain ATCC BAA-335 / MC58).